The sequence spans 210 residues: ATP-dependent Clp protease proteolytic subunit (210 aa).

The active-site Nucleophile is the Ser-111. His-136 is an active-site residue.

Belongs to the peptidase S14 family. Fourteen ClpP subunits assemble into 2 heptameric rings which stack back to back to give a disk-like structure with a central cavity, resembling the structure of eukaryotic proteasomes.

It is found in the cytoplasm. The enzyme catalyses Hydrolysis of proteins to small peptides in the presence of ATP and magnesium. alpha-casein is the usual test substrate. In the absence of ATP, only oligopeptides shorter than five residues are hydrolyzed (such as succinyl-Leu-Tyr-|-NHMec, and Leu-Tyr-Leu-|-Tyr-Trp, in which cleavage of the -Tyr-|-Leu- and -Tyr-|-Trp bonds also occurs).. Its function is as follows. Cleaves peptides in various proteins in a process that requires ATP hydrolysis. Has a chymotrypsin-like activity. Plays a major role in the degradation of misfolded proteins. The polypeptide is ATP-dependent Clp protease proteolytic subunit (Halorhodospira halophila (strain DSM 244 / SL1) (Ectothiorhodospira halophila (strain DSM 244 / SL1))).